The following is a 768-amino-acid chain: UPF0313 protein VV2143 (768 aa).

Residues 363-640 (AYDMIKTSVN…LHKALLRYHD (278 aa)) form the Radical SAM core domain. Positions 377, 381, and 384 each coordinate [4Fe-4S] cluster. Residues 674 to 768 (DARTPAQRRK…GGRNQPSRAR (95 aa)) are disordered. A compositionally biased stretch (basic residues) spans 679–689 (AQRRKSGRHGA). Polar residues predominate over residues 719 to 731 (GGQSNSAPSRSGS).

Belongs to the UPF0313 family. The cofactor is [4Fe-4S] cluster.

The sequence is that of UPF0313 protein VV2143 from Vibrio vulnificus (strain YJ016).